The sequence spans 413 residues: Inactive squalene synthase 2 (413 aa).

Glycine 2 bears the N-acetylglycine mark. Helical transmembrane passes span 283–303 (AIFQ…ALCY) and 390–410 (AIFV…LKAN).

Belongs to the phytoene/squalene synthase family. The cofactor is Mg(2+). Mn(2+) is required as a cofactor. Mostly expressed in hypocotyls, leaves and cotyledons, and, to a lower extent, in stems.

It is found in the endoplasmic reticulum membrane. The chain is Inactive squalene synthase 2 from Arabidopsis thaliana (Mouse-ear cress).